A 172-amino-acid polypeptide reads, in one-letter code: Large ribosomal subunit protein uL10 (172 aa).

The protein belongs to the universal ribosomal protein uL10 family. Part of the ribosomal stalk of the 50S ribosomal subunit. The N-terminus interacts with L11 and the large rRNA to form the base of the stalk. The C-terminus forms an elongated spine to which L12 dimers bind in a sequential fashion forming a multimeric L10(L12)X complex.

Functionally, forms part of the ribosomal stalk, playing a central role in the interaction of the ribosome with GTP-bound translation factors. The protein is Large ribosomal subunit protein uL10 of Acidothermus cellulolyticus (strain ATCC 43068 / DSM 8971 / 11B).